The primary structure comprises 66 residues: Large ribosomal subunit protein bL35 (66 aa).

Over residues 1 to 44 the composition is skewed to basic residues; the sequence is MPKLKSHRGAAKRFRKTASGAIKRRGAYRNHILTKKSTKQKRHL. The disordered stretch occupies residues 1 to 48; that stretch reads MPKLKSHRGAAKRFRKTASGAIKRRGAYRNHILTKKSTKQKRHLRVEA.

Belongs to the bacterial ribosomal protein bL35 family.

The protein is Large ribosomal subunit protein bL35 of Legionella pneumophila (strain Corby).